The following is a 93-amino-acid chain: Em protein H2 (93 aa).

The tract at residues 1–93 (MASGQQERSQ…IDESKFKTKS (93 aa)) is disordered. 3 stretches are compositionally biased toward basic and acidic residues: residues 9-19 (SQLDRKAREGE), 31-52 (LEAHENLAEGRSRGGQTRREQM), and 73-93 (GGERAAREGIDIDESKFKTKS).

It belongs to the small hydrophilic plant seed protein family.

In terms of biological role, it is thought to provide protection for the cytoplasm during the desiccation stage of embryo development. This Triticum aestivum (Wheat) protein is Em protein H2 (EMH2).